A 156-amino-acid polypeptide reads, in one-letter code: uncharacterized protein (156 aa).

An N-acetyltransferase domain is found at 10–156 (VAARTFPLAC…NDYVMVRELV (147 aa)).

This sequence belongs to the acetyltransferase family.

This is an uncharacterized protein from Mycobacterium bovis (strain ATCC BAA-935 / AF2122/97).